A 211-amino-acid polypeptide reads, in one-letter code: Tudor-interacting repair regulator protein (211 aa).

Residues Lys10 and Lys151 each participate in a glycyl lysine isopeptide (Lys-Gly) (interchain with G-Cter in ubiquitin) cross-link. Residues 118 to 205 (TLEQLHAVEI…TEKQKKALEK (88 aa)) form an interaction with PXN region.

The protein belongs to the Nudix hydrolase family. TIRR subfamily. Homodimer. Interacts with TP53BP1 (via the Tudor-like domain); interaction is abolished following DNA damage and TP53BP1 phosphorylation by ATM. Interacts (via the cytoplasmic part) with SDC4. Interacts with TGFB1I1 and PXN.

It localises to the nucleus. In terms of biological role, key regulator of TP53BP1 required to stabilize TP53BP1 and regulate its recruitment to chromatin. In absence of DNA damage, interacts with the tandem Tudor-like domain of TP53BP1, masking the region that binds histone H4 dimethylated at 'Lys-20' (H4K20me2), thereby preventing TP53BP1 recruitment to chromatin and maintaining TP53BP1 localization to the nucleus. Following DNA damage, ATM-induced phosphorylation of TP53BP1 and subsequent recruitment of RIF1 leads to dissociate NUDT16L1/TIRR from TP53BP1, unmasking the tandem Tudor-like domain and allowing recruitment of TP53BP1 to DNA double strand breaks (DSBs). Binds U8 snoRNA. This chain is Tudor-interacting repair regulator protein, found in Mus musculus (Mouse).